We begin with the raw amino-acid sequence, 411 residues long: Dual-specificity RNA methyltransferase RlmN (411 aa).

Glu-124 functions as the Proton acceptor in the catalytic mechanism. Residues 130–379 (EEGRGTLCIS…IRTPRGRDIL (250 aa)) enclose the Radical SAM core domain. Cys-137 and Cys-382 are disulfide-bonded. The [4Fe-4S] cluster site is built by Cys-144, Cys-148, and Cys-151. S-adenosyl-L-methionine-binding positions include 208–209 (GE), Ser-240, 262–264 (SLH), and Asn-339. Cys-382 (S-methylcysteine intermediate) is an active-site residue.

It belongs to the radical SAM superfamily. RlmN family. [4Fe-4S] cluster serves as cofactor.

It localises to the cytoplasm. It carries out the reaction adenosine(2503) in 23S rRNA + 2 reduced [2Fe-2S]-[ferredoxin] + 2 S-adenosyl-L-methionine = 2-methyladenosine(2503) in 23S rRNA + 5'-deoxyadenosine + L-methionine + 2 oxidized [2Fe-2S]-[ferredoxin] + S-adenosyl-L-homocysteine. The catalysed reaction is adenosine(37) in tRNA + 2 reduced [2Fe-2S]-[ferredoxin] + 2 S-adenosyl-L-methionine = 2-methyladenosine(37) in tRNA + 5'-deoxyadenosine + L-methionine + 2 oxidized [2Fe-2S]-[ferredoxin] + S-adenosyl-L-homocysteine. Its function is as follows. Specifically methylates position 2 of adenine 2503 in 23S rRNA and position 2 of adenine 37 in tRNAs. m2A2503 modification seems to play a crucial role in the proofreading step occurring at the peptidyl transferase center and thus would serve to optimize ribosomal fidelity. In Sinorhizobium fredii (strain NBRC 101917 / NGR234), this protein is Dual-specificity RNA methyltransferase RlmN.